Reading from the N-terminus, the 558-residue chain is Dihydroxy-acid dehydratase (558 aa).

Cys-48 provides a ligand contact to [2Fe-2S] cluster. Asp-80 is a binding site for Mg(2+). Cys-121 contributes to the [2Fe-2S] cluster binding site. Residues Asp-122 and Lys-123 each coordinate Mg(2+). Lys-123 is modified (N6-carboxylysine). Position 193 (Cys-193) interacts with [2Fe-2S] cluster. Glu-445 lines the Mg(2+) pocket. Ser-471 acts as the Proton acceptor in catalysis.

It belongs to the IlvD/Edd family. As to quaternary structure, homodimer. [2Fe-2S] cluster is required as a cofactor. It depends on Mg(2+) as a cofactor.

The enzyme catalyses (2R)-2,3-dihydroxy-3-methylbutanoate = 3-methyl-2-oxobutanoate + H2O. The catalysed reaction is (2R,3R)-2,3-dihydroxy-3-methylpentanoate = (S)-3-methyl-2-oxopentanoate + H2O. It participates in amino-acid biosynthesis; L-isoleucine biosynthesis; L-isoleucine from 2-oxobutanoate: step 3/4. It functions in the pathway amino-acid biosynthesis; L-valine biosynthesis; L-valine from pyruvate: step 3/4. In terms of biological role, functions in the biosynthesis of branched-chain amino acids. Catalyzes the dehydration of (2R,3R)-2,3-dihydroxy-3-methylpentanoate (2,3-dihydroxy-3-methylvalerate) into 2-oxo-3-methylpentanoate (2-oxo-3-methylvalerate) and of (2R)-2,3-dihydroxy-3-methylbutanoate (2,3-dihydroxyisovalerate) into 2-oxo-3-methylbutanoate (2-oxoisovalerate), the penultimate precursor to L-isoleucine and L-valine, respectively. The protein is Dihydroxy-acid dehydratase of Prochlorococcus marinus (strain SARG / CCMP1375 / SS120).